A 332-amino-acid polypeptide reads, in one-letter code: MGGVTFIGGGSFGTALAIMLAKKGHNVVIWDRNKEILEDINTLRTNTRYLPNNIIPCCVKAVDDIEKAAKESKYIVLAVPSFAIREVCRKIKGFLREDQIIISIAKGMEEETKKRLSEVVKEELYKNPVVVLSGPSHAEEVANDIPTTVVVTSTDMKYAEEVQDVFMTNSFRVYTNSDIVGVEIGGAVKNIIALASGIGDGIGYGDNTKAALMTRGMSEIMRIGVKLGGKPETFFGLTGMGDLIVTCTSMHSRNRKAGILIGRGMSCREACDKIGMVVEGVKACHTFYELKESLGVSMPITTSLYKVLFENGDPKKEVYELMARDKKNEYYF.

Serine 11, phenylalanine 12, arginine 32, and lysine 106 together coordinate NADPH. 3 residues coordinate sn-glycerol 3-phosphate: lysine 106, glycine 134, and serine 136. Residue alanine 138 participates in NADPH binding. Sn-glycerol 3-phosphate is bound by residues lysine 189, aspartate 242, serine 252, arginine 253, and asparagine 254. The active-site Proton acceptor is the lysine 189. Residue arginine 253 coordinates NADPH. NADPH-binding residues include valine 277 and glutamate 279.

Belongs to the NAD-dependent glycerol-3-phosphate dehydrogenase family.

Its subcellular location is the cytoplasm. It catalyses the reaction sn-glycerol 3-phosphate + NAD(+) = dihydroxyacetone phosphate + NADH + H(+). The catalysed reaction is sn-glycerol 3-phosphate + NADP(+) = dihydroxyacetone phosphate + NADPH + H(+). It participates in membrane lipid metabolism; glycerophospholipid metabolism. Functionally, catalyzes the reduction of the glycolytic intermediate dihydroxyacetone phosphate (DHAP) to sn-glycerol 3-phosphate (G3P), the key precursor for phospholipid synthesis. The chain is Glycerol-3-phosphate dehydrogenase [NAD(P)+] from Clostridium acetobutylicum (strain ATCC 824 / DSM 792 / JCM 1419 / IAM 19013 / LMG 5710 / NBRC 13948 / NRRL B-527 / VKM B-1787 / 2291 / W).